The primary structure comprises 326 residues: Putative GTPase CC_2483 (326 aa).

Residues 61-69 (GVPGAGKST), Asp-203, and 238-240 (SGL) contribute to the GTP site.

Belongs to the SIMIBI class G3E GTPase family. ArgK/MeaB subfamily.

Its function is as follows. May have GTPase activity. May also bind and hydrolyze ATP. May function as chaperone. This is Putative GTPase CC_2483 from Caulobacter vibrioides (strain ATCC 19089 / CIP 103742 / CB 15) (Caulobacter crescentus).